Here is a 303-residue protein sequence, read N- to C-terminus: MQKFDTKTFQGLILTLQDYWARQGCTIVQPLDMEVGAGTSHPMTSLRALGPEPMATAYVQPSRRPTDGRYGENPNRLQHYYQFQVVIKPSPDNIQELYLGSLKELGVDPTIHDIRFVEDNWENPTLGAWGLGWEVWLNGMEVTQFTYFQQVGGLECKPITGEITYGLERLAMYIQGVDSVYDLVWSDGPLGKTTYGDVFHQNEVEQSTYNFEYADVDFLFTCFEQYEKEAQQLLALETPLPLPAYERILKAAHSFNLLDARKAISVTERQRYILRIRTLTKAVAEAYYASREALGFPMCNRNK.

The protein belongs to the class-II aminoacyl-tRNA synthetase family. Tetramer of two alpha and two beta subunits.

The protein resides in the cytoplasm. It catalyses the reaction tRNA(Gly) + glycine + ATP = glycyl-tRNA(Gly) + AMP + diphosphate. This Enterobacter sp. (strain 638) protein is Glycine--tRNA ligase alpha subunit.